The primary structure comprises 484 residues: NADH-quinone oxidoreductase subunit N (484 aa).

13 helical membrane-spanning segments follow: residues Leu10 to Phe30, Phe40 to Gly60, Ser74 to Thr94, Phe108 to Leu128, Leu129 to His149, Phe163 to Ala183, Leu203 to Ala223, Pro237 to Met257, Glu272 to Val292, Met299 to Thr319, Leu327 to Leu347, Tyr370 to Phe390, and Gly404 to Leu424.

The protein belongs to the complex I subunit 2 family. As to quaternary structure, NDH-1 is composed of 14 different subunits. Subunits NuoA, H, J, K, L, M, N constitute the membrane sector of the complex.

Its subcellular location is the cell inner membrane. It carries out the reaction a quinone + NADH + 5 H(+)(in) = a quinol + NAD(+) + 4 H(+)(out). Its function is as follows. NDH-1 shuttles electrons from NADH, via FMN and iron-sulfur (Fe-S) centers, to quinones in the respiratory chain. The immediate electron acceptor for the enzyme in this species is believed to be ubiquinone. Couples the redox reaction to proton translocation (for every two electrons transferred, four hydrogen ions are translocated across the cytoplasmic membrane), and thus conserves the redox energy in a proton gradient. The chain is NADH-quinone oxidoreductase subunit N from Halorhodospira halophila (strain DSM 244 / SL1) (Ectothiorhodospira halophila (strain DSM 244 / SL1)).